The sequence spans 93 residues: Muconolactone Delta-isomerase (93 aa).

It belongs to the muconolactone Delta-isomerase family. As to quaternary structure, homodecamer.

The catalysed reaction is (S)-muconolactone = (4,5-dihydro-5-oxofuran-2-yl)-acetate. The protein operates within aromatic compound metabolism; beta-ketoadipate pathway; 5-oxo-4,5-dihydro-2-furylacetate from catechol: step 3/3. The chain is Muconolactone Delta-isomerase (catC) from Rhodococcus opacus (Nocardia opaca).